The chain runs to 282 residues: Phosphate import ATP-binding protein PstB (282 aa).

Residues 1 to 25 are compositionally biased toward polar residues; the sequence is MKALNANISTMSEVSRSATPQSDSP. A disordered region spans residues 1-26; that stretch reads MKALNANISTMSEVSRSATPQSDSPA. In terms of domain architecture, ABC transporter spans 36 to 277; it reads IRIANFNAWY…PQEKRTDDYV (242 aa). 68–75 contributes to the ATP binding site; that stretch reads GPSGCGKS.

This sequence belongs to the ABC transporter superfamily. Phosphate importer (TC 3.A.1.7) family. The complex is composed of two ATP-binding proteins (PstB), two transmembrane proteins (PstC and PstA) and a solute-binding protein (PstS).

The protein resides in the cell inner membrane. The enzyme catalyses phosphate(out) + ATP + H2O = ADP + 2 phosphate(in) + H(+). Functionally, part of the ABC transporter complex PstSACB involved in phosphate import. Responsible for energy coupling to the transport system. This is Phosphate import ATP-binding protein PstB from Rhodopirellula baltica (strain DSM 10527 / NCIMB 13988 / SH1).